The primary structure comprises 1390 residues: ATPase family AAA domain-containing protein 2 (1390 aa).

Residues 40-63 (RSAGAAQKKPAATTAKAGDGSSVK) form a disordered region. The segment covering 42 to 57 (AGAAQKKPAATTAKAG) has biased composition (low complexity). Phosphoserine occurs at positions 60 and 61. Lysine 125 participates in a covalent cross-link: Glycyl lysine isopeptide (Lys-Gly) (interchain with G-Cter in SUMO2). Phosphoserine occurs at positions 165 and 170. The segment at 216-380 (LNMYTRGKQK…HFERRRKRSR (165 aa)) is disordered. Basic and acidic residues predominate over residues 223-232 (KQKDIQRTDE). Residues 244–288 (SSEEGEDQEHEDDGEDEDDEDDDDDDDDDDDDDDEDDEDEEDGEE) show a composition bias toward acidic residues. Lysine 317 participates in a covalent cross-link: Glycyl lysine isopeptide (Lys-Gly) (interchain with G-Cter in SUMO2). Serine 327, serine 337, serine 342, and serine 410 each carry phosphoserine. 467–474 (GPPGTGKT) provides a ligand contact to ATP. Phosphoserine is present on residues serine 746 and serine 751. 2 coiled-coil regions span residues 970–994 (LTAE…IFLR) and 1086–1112 (YAII…KKRG). In terms of domain architecture, Bromo spans 980–1092 (EQEEDTFREL…DTAYAIIKEE (113 aa)). Positions 1124 to 1163 (HVMPKQNSTLVGDKRSDPEQNEKLKTPSTPVACSTPAQLK) are disordered. Lysine 1128 participates in a covalent cross-link: Glycyl lysine isopeptide (Lys-Gly) (interchain with G-Cter in SUMO2). The segment covering 1135-1148 (GDKRSDPEQNEKLK) has biased composition (basic and acidic residues). Serine 1139 is modified (phosphoserine). A Glycyl lysine isopeptide (Lys-Gly) (interchain with G-Cter in SUMO2) cross-link involves residue lysine 1148. Residues threonine 1149, threonine 1152, and threonine 1176 each carry the phosphothreonine modification. Residues 1149 to 1160 (TPSTPVACSTPA) show a composition bias toward polar residues. Residues 1181-1242 (RKISQAKDDS…SESKLELRNN (62 aa)) are disordered. Basic and acidic residues predominate over residues 1185–1200 (QAKDDSQNAIDHKIES). Phosphoserine is present on residues serine 1200, serine 1233, and serine 1235. The segment covering 1229–1242 (QQNASESKLELRNN) has biased composition (polar residues). Lysine 1236 is covalently cross-linked (Glycyl lysine isopeptide (Lys-Gly) (interchain with G-Cter in SUMO2)). Residues serine 1243 and serine 1302 each carry the phosphoserine modification. Threonine 1323 carries the post-translational modification Phosphothreonine.

The protein belongs to the AAA ATPase family. As to quaternary structure, interacts with ESR1 and NCOA3 and these interactions are enhanced by estradiol. Interacts with acetylated lysine residues on histone H1.4, H2A, H2B and H3 (in vitro). Highly expressed in estrogen receptor positive breast tumors and in osteosarcoma tumors.

It localises to the nucleus. It carries out the reaction ATP + H2O = ADP + phosphate + H(+). In terms of biological role, may be a transcriptional coactivator of the nuclear receptor ESR1 required to induce the expression of a subset of estradiol target genes, such as CCND1, MYC and E2F1. May play a role in the recruitment or occupancy of CREBBP at some ESR1 target gene promoters. May be required for histone hyperacetylation. Involved in the estrogen-induced cell proliferation and cell cycle progression of breast cancer cells. The chain is ATPase family AAA domain-containing protein 2 (ATAD2) from Homo sapiens (Human).